A 715-amino-acid chain; its full sequence is Ribosomal RNA large subunit methyltransferase K/L (715 aa).

A THUMP domain is found at 43 to 154 (TQYRALLWSR…RDDLVLSLDL (112 aa)).

The protein belongs to the methyltransferase superfamily. RlmKL family.

It localises to the cytoplasm. The catalysed reaction is guanosine(2445) in 23S rRNA + S-adenosyl-L-methionine = N(2)-methylguanosine(2445) in 23S rRNA + S-adenosyl-L-homocysteine + H(+). It catalyses the reaction guanosine(2069) in 23S rRNA + S-adenosyl-L-methionine = N(2)-methylguanosine(2069) in 23S rRNA + S-adenosyl-L-homocysteine + H(+). In terms of biological role, specifically methylates the guanine in position 2445 (m2G2445) and the guanine in position 2069 (m7G2069) of 23S rRNA. The polypeptide is Ribosomal RNA large subunit methyltransferase K/L (Mannheimia succiniciproducens (strain KCTC 0769BP / MBEL55E)).